The primary structure comprises 1191 residues: Major DNA-binding protein (1191 aa).

The short motif at 820-821 (FW) is the Required for filament formation element. Disordered regions lie at residues 1122–1146 (TAAGSAAGGGGSATEGGGGGAAADE) and 1168–1191 (AGLINGDDVRGDDEFELPSKRSRL). Residues 1127 to 1142 (AAGGGGSATEGGGGGA) show a composition bias toward gly residues. The required for nuclear localization stretch occupies residues 1173 to 1191 (GDDVRGDDEFELPSKRSRL).

This sequence belongs to the herpesviridae major DNA-binding protein family. Homooligomers. Forms double-helical filaments necessary for the formation of replication compartments within the host nucleus. Interacts with the origin-binding protein. Interacts with the helicase primase complex; this interaction stimulates primer synthesis activity of the helicase-primase complex. Interacts with the DNA polymerase. Interacts with the alkaline exonuclease; this interaction increases its nuclease processivity.

It localises to the host nucleus. In terms of biological role, single-stranded DNA-binding protein required for DNA replication. Plays several crucial roles in viral infection. Participates in the opening of the viral DNA origin to initiate replication by interacting with the origin-binding protein. May disrupt loops, hairpins and other secondary structures present on ssDNA to reduce and eliminate pausing of viral DNA polymerase at specific sites during elongation. Promotes viral DNA recombination by performing strand-transfer, characterized by the ability to transfer a DNA strand from a linear duplex to a complementary single-stranded DNA circle. Can also catalyze the renaturation of complementary single strands. Additionally, reorganizes the host cell nucleus, leading to the formation of prereplicative sites and replication compartments. This process is driven by the protein which can form double-helical filaments in the absence of DNA. This chain is Major DNA-binding protein, found in Mus musculus (Mouse).